A 397-amino-acid polypeptide reads, in one-letter code: GDP-mannose transporter 1 (397 aa).

A disordered region spans residues 1 to 57 (MSKPFVPTPNISRPATPSSLDYGKDEASSTLLRDMGERGDRERKDREERDKKEAMPS). At 1–61 (MSKPFVPTPN…KEAMPSGQDQ (61 aa)) the chain is on the cytoplasmic side. Residues 9–19 (PNISRPATPSS) show a composition bias toward polar residues. A compositionally biased stretch (basic and acidic residues) spans 34-54 (DMGERGDRERKDREERDKKEA). The chain crosses the membrane as a helical span at residues 62–82 (VLPILSYCAASIMMTVVNKYV). Topologically, residues 83 to 87 (VSGAN) are lumenal. N-linked (GlcNAc...) asparagine glycosylation occurs at asparagine 87. The chain crosses the membrane as a helical span at residues 88-108 (FTMTFLLLAIQSSVCVLAVTT). Over 109–124 (VKKLGFISFRDFDKND) the chain is Cytoplasmic. Residues 125–142 (AKAWWPISTLLVAVIYTG) traverse the membrane as a helical segment. Residues 143-145 (SKA) are Lumenal-facing. A helical transmembrane segment spans residues 146–168 (LQFLSIPVYTIFKNLTIILIAYG). The Cytoplasmic segment spans residues 169-174 (EVFMFN). The helical transmembrane segment at 175–197 (GAVSGLTLCSFALMVGSSIIAAW) threads the bilayer. At 198 to 228 (SDITSVWNKEPELDPITGLEITVGPVSTIGG) the chain is on the lumenal side. Residues 229–249 (LNAGYIWMALNCFVSAAYVLF) form a helical membrane-spanning segment. Over 250–272 (MRKRIKVTGFKDWDSMYYNNLLS) the chain is Cytoplasmic. Residues 273 to 293 (IPILVVFSLVIEDWGSESLAL) traverse the membrane as a helical segment. Residues 294-300 (NFPASNR) lie on the Lumenal side of the membrane. Residues 301-321 (VLLLSAMAFSGAAAVFISYST) traverse the membrane as a helical segment. Residues 322 to 332 (AWCVRITGSTT) are Cytoplasmic-facing. The chain crosses the membrane as a helical span at residues 333 to 353 (YSMVGALNKLPVAASGILFFG). Topologically, residues 354–355 (DP) are lumenal. The helical transmembrane segment at 356-376 (ANFGNISAIAVGGVAGVVYAV) threads the bilayer. Over 377 to 397 (AKTNQAKVEKARQARAAGGRP) the chain is Cytoplasmic.

This sequence belongs to the TPT transporter family. SLC35D subfamily. Homooligomer.

Its subcellular location is the golgi apparatus membrane. The protein resides in the cytoplasmic vesicle membrane. It localises to the endoplasmic reticulum membrane. Its function is as follows. Involved in the import of GDP-mannose from the cytoplasm into the Golgi lumen. Involved in capsule synthesis. The polypeptide is GDP-mannose transporter 1 (GMT1) (Cryptococcus neoformans var. neoformans serotype D (strain B-3501A) (Filobasidiella neoformans)).